Reading from the N-terminus, the 237-residue chain is BTB/POZ domain-containing protein KCTD6 (237 aa).

The segment at 1–104 is interaction with ANK1 isoform Mu17; the sequence is MDNGDWGYMM…FYQIEPLIQC (104 aa). The interval 10-110 is interaction with CUL3; it reads MTDPVTLNVG…LIQCLNDPKP (101 aa). One can recognise a BTB domain in the interval 12 to 81; that stretch reads DPVTLNVGGH…LRTSELTLPL (70 aa). The tract at residues 113 to 187 is interaction with USP21; it reads PMDTFEEVVE…TFGPCDYHQE (75 aa).

Homopentamer. Interacts with KCTD11; KCTD6 and KCTD11 may associate in pentameric assemblies. Interacts (via BTB domain) with CUL3; initially a 4:4 stoichiometry has been reported, however, electron microscopy revealed pentameric states with a five-pointed pinwheel shape. The interaction with CUL3 is indicative for a participation in a BCR (BTB-CUL3-RBX1) E3 ubiquitin-protein ligase complex. Interacts with HDAC1; probably indirect as the interaction is requires the presence of KCTD11. Interacts with USP21 (preferentially catalytic inactive form). Interacts with ANK1 isoform Mu17; detected in striated muscle. Interacts with USP11. In terms of tissue distribution, highly expressed in cerebellum and brain. Expression is down-regulated in medulloblastoma.

Its subcellular location is the cytoplasm. The protein localises to the myofibril. The protein resides in the sarcomere. It localises to the m line. It functions in the pathway protein modification; protein ubiquitination. In terms of biological role, probable substrate-specific adapter of a BCR (BTB-CUL3-RBX1) E3 ubiquitin-protein ligase complex mediating the ubiquitination and subsequent proteasomal degradation of target proteins. Promotes the ubiquitination of HDAC1; the function seems to depend on KCTD11:KCTD6 oligomerization. Can function as antagonist of the Hedgehog pathway by affecting the nuclear transfer of transcription factor GLI1; the function probably occurs via HDAC1 down-regulation, keeping GLI1 acetylated and inactive. Inhibits cell growth and tumorigenicity of medulloblastoma (MDB). Involved in regulating protein levels of ANK1 isoform Mu17 probably implicating CUL3-dependent proteasomal degradation. In Homo sapiens (Human), this protein is BTB/POZ domain-containing protein KCTD6 (KCTD6).